A 142-amino-acid chain; its full sequence is Large ribosomal subunit protein uL13 (142 aa).

This sequence belongs to the universal ribosomal protein uL13 family. As to quaternary structure, part of the 50S ribosomal subunit.

In terms of biological role, this protein is one of the early assembly proteins of the 50S ribosomal subunit, although it is not seen to bind rRNA by itself. It is important during the early stages of 50S assembly. The sequence is that of Large ribosomal subunit protein uL13 from Shewanella oneidensis (strain ATCC 700550 / JCM 31522 / CIP 106686 / LMG 19005 / NCIMB 14063 / MR-1).